The sequence spans 305 residues: Formamidopyrimidine-DNA glycosylase (305 aa).

The Schiff-base intermediate with DNA role is filled by proline 2. The Proton donor role is filled by glutamate 3. Lysine 59 functions as the Proton donor; for beta-elimination activity in the catalytic mechanism. The DNA site is built by histidine 92, arginine 111, and arginine 154. The FPG-type zinc finger occupies 239-273 (QVFDRAGEPCPVCGTPIRKVAVAQRGTHFCPRCQP). Arginine 263 serves as the catalytic Proton donor; for delta-elimination activity. The tract at residues 282 to 305 (PRRARPGRRGNSVRVAAEPPGTYE) is disordered.

It belongs to the FPG family. As to quaternary structure, monomer. The cofactor is Zn(2+).

The catalysed reaction is Hydrolysis of DNA containing ring-opened 7-methylguanine residues, releasing 2,6-diamino-4-hydroxy-5-(N-methyl)formamidopyrimidine.. The enzyme catalyses 2'-deoxyribonucleotide-(2'-deoxyribose 5'-phosphate)-2'-deoxyribonucleotide-DNA = a 3'-end 2'-deoxyribonucleotide-(2,3-dehydro-2,3-deoxyribose 5'-phosphate)-DNA + a 5'-end 5'-phospho-2'-deoxyribonucleoside-DNA + H(+). In terms of biological role, involved in base excision repair of DNA damaged by oxidation or by mutagenic agents. Acts as a DNA glycosylase that recognizes and removes damaged bases. Has a preference for oxidized purines, such as 7,8-dihydro-8-oxoguanine (8-oxoG). Has AP (apurinic/apyrimidinic) lyase activity and introduces nicks in the DNA strand. Cleaves the DNA backbone by beta-delta elimination to generate a single-strand break at the site of the removed base with both 3'- and 5'-phosphates. In Symbiobacterium thermophilum (strain DSM 24528 / JCM 14929 / IAM 14863 / T), this protein is Formamidopyrimidine-DNA glycosylase.